A 196-amino-acid chain; its full sequence is Ribosome maturation factor RimP (196 aa).

The disordered stretch occupies residues Leu164–Glu196. Residues Gly173 to Lys182 are compositionally biased toward basic residues.

Belongs to the RimP family.

It localises to the cytoplasm. Functionally, required for maturation of 30S ribosomal subunits. The protein is Ribosome maturation factor RimP of Xanthomonas axonopodis pv. citri (strain 306).